Consider the following 320-residue polypeptide: ATP-dependent 6-phosphofructokinase (320 aa).

Residues glycine 11, 72–73 (RY), and 102–105 (GDGS) contribute to the ATP site. Aspartate 103 contacts Mg(2+). Residues 125–127 (TID), arginine 162, 169–171 (MGR), glutamate 222, arginine 243, and 249–252 (HMQR) contribute to the substrate site. Residue aspartate 127 is the Proton acceptor of the active site.

It belongs to the phosphofructokinase type A (PFKA) family. ATP-dependent PFK group I subfamily. Prokaryotic clade 'B1' sub-subfamily. In terms of assembly, homotetramer. The cofactor is Mg(2+).

The protein resides in the cytoplasm. The catalysed reaction is beta-D-fructose 6-phosphate + ATP = beta-D-fructose 1,6-bisphosphate + ADP + H(+). Its pathway is carbohydrate degradation; glycolysis; D-glyceraldehyde 3-phosphate and glycerone phosphate from D-glucose: step 3/4. Allosterically activated by ADP and other diphosphonucleosides, and allosterically inhibited by phosphoenolpyruvate. Its function is as follows. Catalyzes the phosphorylation of D-fructose 6-phosphate to fructose 1,6-bisphosphate by ATP, the first committing step of glycolysis. This is ATP-dependent 6-phosphofructokinase from Lactiplantibacillus plantarum (strain ATCC BAA-793 / NCIMB 8826 / WCFS1) (Lactobacillus plantarum).